The sequence spans 437 residues: Glucose-1-phosphate adenylyltransferase (437 aa).

Residues Tyr113, Gly179, 194-195 (EK), and Ser212 contribute to the alpha-D-glucose 1-phosphate site.

It belongs to the bacterial/plant glucose-1-phosphate adenylyltransferase family. In terms of assembly, homotetramer.

The catalysed reaction is alpha-D-glucose 1-phosphate + ATP + H(+) = ADP-alpha-D-glucose + diphosphate. It participates in glycan biosynthesis; glycogen biosynthesis. Functionally, involved in the biosynthesis of ADP-glucose, a building block required for the elongation reactions to produce glycogen. Catalyzes the reaction between ATP and alpha-D-glucose 1-phosphate (G1P) to produce pyrophosphate and ADP-Glc. The chain is Glucose-1-phosphate adenylyltransferase from Haemophilus influenzae (strain 86-028NP).